Reading from the N-terminus, the 310-residue chain is Quinolinate synthase (310 aa).

Positions 27 and 44 each coordinate iminosuccinate. Cys89 provides a ligand contact to [4Fe-4S] cluster. Residues 115 to 117 (YVN) and Ser132 each bind iminosuccinate. Position 175 (Cys175) interacts with [4Fe-4S] cluster. Residues 201–203 (HPE) and Thr222 contribute to the iminosuccinate site. Cys267 contributes to the [4Fe-4S] cluster binding site.

Belongs to the quinolinate synthase family. Type 2 subfamily. [4Fe-4S] cluster is required as a cofactor.

It localises to the cytoplasm. It catalyses the reaction iminosuccinate + dihydroxyacetone phosphate = quinolinate + phosphate + 2 H2O + H(+). It functions in the pathway cofactor biosynthesis; NAD(+) biosynthesis; quinolinate from iminoaspartate: step 1/1. Its function is as follows. Catalyzes the condensation of iminoaspartate with dihydroxyacetone phosphate to form quinolinate. This is Quinolinate synthase from Thermus thermophilus (strain ATCC BAA-163 / DSM 7039 / HB27).